A 413-amino-acid polypeptide reads, in one-letter code: MKIVDVLCTPGLTGFYFDDQRAIKKGAGHDGFTYTGSTVTEGFTQVRQKGESISVLLVLEDGQVAHGDCAAVQYSGAGGRDPLFLAKDFIPVIEKEIAPKLIGREITNFKPMAEEFDKMTVNGNRLHTAIRYGITQAILDAVAKTRKVTMAEVIRDEYNPGAEINAVPVFAQSGDDRYDNVDKMIIKEADVLPHALINNVEEKLGLKGEKLLEYVKWLRDRIIKLRVREDYAPIFHIDVYGTIGAAFDVDIKAMADYIQTLAEAAKPFHLRIEGPMDVEDRQKQMEAMRDLRAELDGRGVDAELVADEWCNTVEDVKFFTDNKAGHMVQIKTPDLGGVNNIADAIMYCKANGMGAYCGGTCNETNRSAEVTTNIGMACGARQVLAKPGMGVDEGMMIVKNEMNRVLALVGRRK.

Q172 is a binding site for (2S,3S)-3-methyl-L-aspartate. The Mg(2+) site is built by D238, E273, and D307. Q329 contacts (2S,3S)-3-methyl-L-aspartate. Residue K331 is the Proton acceptor of the active site. (2S,3S)-3-methyl-L-aspartate-binding positions include 360–361 (TC) and C361.

This sequence belongs to the methylaspartate ammonia-lyase family. In terms of assembly, homodimer. Mg(2+) serves as cofactor.

The enzyme catalyses (2S,3S)-3-methyl-L-aspartate = mesaconate + NH4(+). It functions in the pathway amino-acid degradation; L-glutamate degradation via mesaconate pathway; acetate and pyruvate from L-glutamate: step 2/4. Its activity is regulated as follows. Inhibited by calcium ions. Functionally, involved in the methylaspartate cycle. Catalyzes the formation of the alpha,beta-unsaturated bond by the reversible anti elimination of ammonia from L-threo-beta-methylaspartate (L-threo-(2S,3S)-3-methylaspartate) to give mesaconate. It can also use L-erythro-beta-methylaspartate (L-erythro-(2S,3R)-3-methylaspartate), L-aspartate, fumarate and ethylfumarate as substrates. This Clostridium tetanomorphum protein is Methylaspartate ammonia-lyase.